A 305-amino-acid polypeptide reads, in one-letter code: Type II restriction enzyme SsoII (305 aa).

It carries out the reaction Endonucleolytic cleavage of DNA to give specific double-stranded fragments with terminal 5'-phosphates.. Functionally, a P subtype restriction enzyme that recognizes the double-stranded sequence 5'-CCNGG-3' and cleaves before C-1. The chain is Type II restriction enzyme SsoII (ssoIIR) from Shigella sonnei.